The chain runs to 299 residues: Nicotinate-nucleotide pyrophosphorylase [carboxylating] (299 aa).

The segment at 8–12 (HLLPP) is important for hexamer formation. Residues Arg102, 138-139 (RK), 160-161 (HR), Lys171, Glu201, Asp222, 248-250 (SGG), and Gly270 each bind quinolinate. A Phosphothreonine modification is found at Thr291.

This sequence belongs to the NadC/ModD family. As to quaternary structure, hexamer formed by 3 homodimers.

It carries out the reaction nicotinate beta-D-ribonucleotide + CO2 + diphosphate = quinolinate + 5-phospho-alpha-D-ribose 1-diphosphate + 2 H(+). Its pathway is cofactor biosynthesis; NAD(+) biosynthesis; nicotinate D-ribonucleotide from quinolinate: step 1/1. Involved in the catabolism of quinolinic acid (QA). This Bos taurus (Bovine) protein is Nicotinate-nucleotide pyrophosphorylase [carboxylating] (QPRT).